Consider the following 145-residue polypeptide: 3-hydroxyacyl-[acyl-carrier-protein] dehydratase FabZ (145 aa).

H48 is a catalytic residue.

The protein belongs to the thioester dehydratase family. FabZ subfamily.

It is found in the cytoplasm. The enzyme catalyses a (3R)-hydroxyacyl-[ACP] = a (2E)-enoyl-[ACP] + H2O. Involved in unsaturated fatty acids biosynthesis. Catalyzes the dehydration of short chain beta-hydroxyacyl-ACPs and long chain saturated and unsaturated beta-hydroxyacyl-ACPs. This chain is 3-hydroxyacyl-[acyl-carrier-protein] dehydratase FabZ, found in Marinobacter nauticus (strain ATCC 700491 / DSM 11845 / VT8) (Marinobacter aquaeolei).